A 221-amino-acid polypeptide reads, in one-letter code: Ras-related protein Rab-27A (221 aa).

Serine 2 bears the N-acetylserine mark. Position 2 is a phosphoserine (serine 2). 16 to 24 (GDSGVGKTS) is a GTP binding site. The Effector region motif lies at 38–46 (FITTVGIDF). Residues 74–78 (DTAGQ), 133–136 (NKSD), and 163–165 (SAA) contribute to the GTP site. Cysteine 123 and cysteine 188 are disulfide-bonded. S-geranylgeranyl cysteine attachment occurs at residues cysteine 219 and cysteine 221. Position 221 is a cysteine methyl ester (cysteine 221).

The protein belongs to the small GTPase superfamily. Rab family. In terms of assembly, binds SYTL1, SLAC2B, MYRIP, SYTL3, SYTL4 and SYTL5. Interacts with RPH3A and RPH3A. Binds MLPH and SYTL2. Interacts with UNC13D. Does not interact with the BLOC-3 complex (heterodimer of HPS1 and HPS4). Interacts (GDP-bound form preferentially) with DENND10. In terms of tissue distribution, found in all the examined tissues except in brain. Low expression was found in thymus, kidney, muscle and placenta. Detected in melanocytes, and in most tumor cell lines examined. Expressed in cytotoxic T-lymphocytes (CTL) and mast cells.

The protein resides in the membrane. The protein localises to the melanosome. Its subcellular location is the late endosome. It is found in the lysosome. The enzyme catalyses GTP + H2O = GDP + phosphate + H(+). Its activity is regulated as follows. Regulated by guanine nucleotide exchange factors (GEFs) which promote the exchange of bound GDP for free GTP, GTPase activating proteins (GAPs) which increase the GTP hydrolysis activity, and GDP dissociation inhibitors which inhibit the dissociation of the nucleotide from the GTPase. Activated by GEFs such as DENND10. Small GTPase which cycles between active GTP-bound and inactive GDP-bound states. In its active state, binds to a variety of effector proteins to regulate homeostasis of late endocytic pathway, including endosomal positioning, maturation and secretion. Plays a role in cytotoxic granule exocytosis in lymphocytes. Required for both granule maturation and granule docking and priming at the immunologic synapse. This is Ras-related protein Rab-27A (RAB27A) from Homo sapiens (Human).